Here is a 116-residue protein sequence, read N- to C-terminus: MAGRSGDSDEELLKTVRLIKFLYQSNPPPNPEGTRQARRNRRRRWRERQRQIRKISGWILSTYLGRSAEPVPLQLPPLERLNLDCSEDCGTSGTQGVGSPEILVESPAVLEPGTKE.

Phosphoserine; by host CK2 occurs at positions 5 and 8. The homomultimerization stretch occupies residues 18–26 (LIKFLYQSN). Positions 23–48 (YQSNPPPNPEGTRQARRNRRRRWRER) are disordered. Residues 34-50 (TRQARRNRRRRWRERQR) carry the Nuclear localization signal and RNA-binding (RRE) motif. A compositionally biased stretch (basic residues) spans 36–48 (QARRNRRRRWRER). Residues 73-84 (LQLPPLERLNLD) carry the Nuclear export signal and binding to XPO1 motif. A disordered region spans residues 90–116 (GTSGTQGVGSPEILVESPAVLEPGTKE). Residues serine 92 and serine 99 each carry the phosphoserine; by host modification.

The protein belongs to the HIV-1 REV protein family. In terms of assembly, homomultimer; when bound to the RRE. Multimeric assembly is essential for activity and may involve XPO1. Binds to human KPNB1, XPO1, TNPO1, RANBP5 and IPO7. Interacts with the viral Integrase. Interacts with human KHDRBS1. Interacts with human NAP1; this interaction decreases Rev multimerization and stimulates its activity. Interacts with human DEAD-box helicases DDX3 and DDX24; these interactions may serve for viral RNA export to the cytoplasm and packaging, respectively. Interacts with human PSIP1; this interaction may inhibit HIV-1 DNA integration by promoting dissociation of the Integrase-LEDGF/p75 complex. Post-translationally, asymmetrically arginine dimethylated at one site by host PRMT6. Methylation impairs the RNA-binding activity and export of viral RNA from the nucleus to the cytoplasm. Phosphorylated by protein kinase CK2. Presence of, and maybe binding to the N-terminus of the regulatory beta subunit of CK2 is necessary for CK2-mediated Rev's phosphorylation.

The protein localises to the host nucleus. Its subcellular location is the host nucleolus. It localises to the host cytoplasm. In terms of biological role, escorts unspliced or incompletely spliced viral pre-mRNAs (late transcripts) out of the nucleus of infected cells. These pre-mRNAs carry a recognition sequence called Rev responsive element (RRE) located in the env gene, that is not present in fully spliced viral mRNAs (early transcripts). This function is essential since most viral proteins are translated from unspliced or partially spliced pre-mRNAs which cannot exit the nucleus by the pathway used by fully processed cellular mRNAs. Rev itself is translated from a fully spliced mRNA that readily exits the nucleus. Rev's nuclear localization signal (NLS) binds directly to KPNB1/Importin beta-1 without previous binding to KPNA1/Importin alpha-1. KPNB1 binds to the GDP bound form of RAN (Ran-GDP) and targets Rev to the nucleus. In the nucleus, the conversion from Ran-GDP to Ran-GTP dissociates Rev from KPNB1 and allows Rev's binding to the RRE in viral pre-mRNAs. Rev multimerization on the RRE via cooperative assembly exposes its nuclear export signal (NES) to the surface. Rev can then form a complex with XPO1/CRM1 and Ran-GTP, leading to nuclear export of the complex. Conversion from Ran-GTP to Ran-GDP mediates dissociation of the Rev/RRE/XPO1/RAN complex, so that Rev can return to the nucleus for a subsequent round of export. Beside KPNB1, also seems to interact with TNPO1/Transportin-1, RANBP5/IPO5 and IPO7/RANBP7 for nuclear import. The nucleoporin-like HRB/RIP is an essential cofactor that probably indirectly interacts with Rev to release HIV RNAs from the perinuclear region to the cytoplasm. This Human immunodeficiency virus type 1 group M subtype B (isolate OYI) (HIV-1) protein is Protein Rev.